A 21-amino-acid chain; its full sequence is Preblooming protein 2 (21 aa).

Functionally, possible mediator for cell division in the blooming process. The polypeptide is Preblooming protein 2 (Prorocentrum triestinum (Red tide alga)).